The chain runs to 255 residues: Hemin import ATP-binding protein HmuV (255 aa).

The ABC transporter domain maps to 2–238 (LQVEGLYLCR…AALKAVYGID (237 aa)). 34–41 (GPNGAGKS) contacts ATP.

Belongs to the ABC transporter superfamily. Heme (hemin) importer (TC 3.A.1.14.5) family. As to quaternary structure, the complex is composed of two ATP-binding proteins (HmuV), two transmembrane proteins (HmuU) and a solute-binding protein (HmuT).

The protein resides in the cell inner membrane. In terms of biological role, part of the ABC transporter complex HmuTUV involved in hemin import. Responsible for energy coupling to the transport system. The chain is Hemin import ATP-binding protein HmuV from Pseudomonas putida (strain ATCC 47054 / DSM 6125 / CFBP 8728 / NCIMB 11950 / KT2440).